The chain runs to 233 residues: UPF0758 protein SRU_2338 (233 aa).

The 123-residue stretch at 110–232 (QVTCPADVAD…HTSLAERGVI (123 aa)) folds into the MPN domain. Residues H181, H183, and D194 each coordinate Zn(2+). The JAMM motif motif lies at 181–194 (HNHPSGNPEPSRED).

This sequence belongs to the UPF0758 family.

This chain is UPF0758 protein SRU_2338, found in Salinibacter ruber (strain DSM 13855 / M31).